Reading from the N-terminus, the 197-residue chain is Cold-regulated 413 plasma membrane protein 1 (197 aa).

Residues M1–G40 are Extracellular-facing. Residues L41–V61 form a helical membrane-spanning segment. Residues L62–M71 are Cytoplasmic-facing. The chain crosses the membrane as a helical span at residues L72 to F92. Topologically, residues R93–G94 are extracellular. A helical transmembrane segment spans residues E95–A115. At R116–E117 the chain is on the cytoplasmic side. Residues Y118–G138 traverse the membrane as a helical segment. At T139 to R141 the chain is on the extracellular side. A helical membrane pass occupies residues D142 to I162. The Cytoplasmic segment spans residues R163–N176. Residues G177–F197 form a helical membrane-spanning segment.

Belongs to the Cold-regulated 413 protein family.

It localises to the membrane. The chain is Cold-regulated 413 plasma membrane protein 1 (COR413PM1) from Arabidopsis thaliana (Mouse-ear cress).